Here is a 514-residue protein sequence, read N- to C-terminus: 2,3-bisphosphoglycerate-independent phosphoglycerate mutase (514 aa).

Positions 13 and 63 each coordinate Mn(2+). S63 functions as the Phosphoserine intermediate in the catalytic mechanism. Residues H124, 154-155 (RD), R186, R192, 258-261 (RADR), and K332 each bind substrate. Mn(2+)-binding residues include D399, H403, D440, H441, and H459.

This sequence belongs to the BPG-independent phosphoglycerate mutase family. In terms of assembly, monomer. Mn(2+) is required as a cofactor.

The catalysed reaction is (2R)-2-phosphoglycerate = (2R)-3-phosphoglycerate. The protein operates within carbohydrate degradation; glycolysis; pyruvate from D-glyceraldehyde 3-phosphate: step 3/5. Catalyzes the interconversion of 2-phosphoglycerate and 3-phosphoglycerate. The protein is 2,3-bisphosphoglycerate-independent phosphoglycerate mutase of Legionella pneumophila (strain Paris).